We begin with the raw amino-acid sequence, 438 residues long: Histidinol dehydrogenase (438 aa).

3 residues coordinate NAD(+): Tyr-138, Gln-199, and Asn-222. The substrate site is built by Ser-245, Gln-267, and His-270. Zn(2+) contacts are provided by Gln-267 and His-270. Residues Glu-335 and His-336 each act as proton acceptor in the active site. Substrate-binding residues include His-336, Asp-369, Glu-423, and His-428. Asp-369 is a binding site for Zn(2+). His-428 serves as a coordination point for Zn(2+).

The protein belongs to the histidinol dehydrogenase family. It depends on Zn(2+) as a cofactor.

It catalyses the reaction L-histidinol + 2 NAD(+) + H2O = L-histidine + 2 NADH + 3 H(+). It functions in the pathway amino-acid biosynthesis; L-histidine biosynthesis; L-histidine from 5-phospho-alpha-D-ribose 1-diphosphate: step 9/9. Functionally, catalyzes the sequential NAD-dependent oxidations of L-histidinol to L-histidinaldehyde and then to L-histidine. This chain is Histidinol dehydrogenase, found in Burkholderia lata (strain ATCC 17760 / DSM 23089 / LMG 22485 / NCIMB 9086 / R18194 / 383).